The chain runs to 1181 residues: MTSEQEEVSILTLQVTFPDPELPPLSLTVSPEESVQEIRNYIRDAFVQERCITSFTLNLNGQPIDGFESLAEIEGLESGATIELTNAPYNEHEARLHVIRVRELAGFSNNSHAAVGQDAGMTAFNRTEGIDKTPKDYMQEVVETKAQKEAKAKLKAEQKKAKAAAKAEALAKNEEVSEDEESEPEDDTPMKQSTQVLEENSPMHGFKLEESKSLQELFPDRQNLPAPALLSLHLSHWNPPTQAQQLNGELLYLQCATLEGESYQIVAHTNGFYVANSTLGSFDPSPKPLMVKTKAKKQNGGKKGGKKTETEISYVPITTENMHHSLYDLLVSLSDKFAKKIASNYAELNAAGMLSVVPPTNCFLANPWLTKPAGFRRPDMARNQELLSLKNLEGQDDTREWSEDLQSLKELPRETINDRVVRERHLNKTYFDFTEAAVAGAVQVVHGEIQPINPSEPEASHIFLHKGIFYSVGADGSGTYAEIGGDEAARVASAKDLQAVQQLVQFDFPEIASLCTTVVDYQGKRIVCQSPVPGIFRQPENAPPQVKYGSVEGAEEIASEQEFGDAFKPIAAAFRLKTHTVKDANKEHSLHLASDCKGLAGTDGRKYLLDLYRLAPVDIAFLDANPSYPHQLALLRFEAVEAYFRHQVRAEIKKQSLDEDETPKFEVEPFYLNPDAFVLPAPKEDEDAVRAASEFVSNTIIPEHVEAVIAGFGTTPIDGQQLTQSLHGKGIPMRHLASVIAAAKKSDTSKAQFLAELCEQEIAVRSAKHLLRNEMAKKGANPKYVVAHVMNLLLGSTSKVFDTPAGLLAVSDSVNLSVDEAKAAVAAIAKTRFGYDLDTSIFAKRPVQLLRELSGKLGLQFLQKEYEFGAEPFAVADVVNILPVFKTTTFRSKLVEEALEAARNSVNTDKDVALQLLRESIPLAEQVYGSVNPELTKVYNTASYLAYEMDEALLAADLGRRACIMSERCSGIDSVDAILNYLNLSLFEHAIGNYVGALHMIKHAVSVWVTVCGTHLHPDIITSLSNAITMLTTLKRWNESRQWLEKTIVITESVANEKAQAPLRFQLAQTMCHEQQYKEATDELRRALKLFNAHYGEDDQNTKDCAVWLKSLTQAAVSIQRQKLWEQEQGRLARQAPKPTATHQKEAPKKASKKTKGKGKGKDDKGEKLVAELKKKKAGKR.

Residues 165–195 form a disordered region; it reads AKAEALAKNEEVSEDEESEPEDDTPMKQSTQ. The span at 176–187 shows a compositional bias: acidic residues; it reads VSEDEESEPEDD. One can recognise a Clu domain in the interval 379 to 622; that stretch reads DMARNQELLS…RLAPVDIAFL (244 aa). The tract at residues 1130–1181 is disordered; the sequence is GRLARQAPKPTATHQKEAPKKASKKTKGKGKGKDDKGEKLVAELKKKKAGKR. Over residues 1150 to 1159 the composition is skewed to basic residues; the sequence is KASKKTKGKG. A compositionally biased stretch (basic and acidic residues) spans 1160–1173; the sequence is KGKDDKGEKLVAEL.

This sequence belongs to the CLU family. As to quaternary structure, may associate with the eukaryotic translation initiation factor 3 (eIF-3) complex.

Its subcellular location is the cytoplasm. MRNA-binding protein involved in proper cytoplasmic distribution of mitochondria. This chain is Clustered mitochondria protein homolog, found in Yarrowia lipolytica (strain CLIB 122 / E 150) (Yeast).